The chain runs to 245 residues: Ribonuclease PH (245 aa).

Phosphate contacts are provided by residues Arg93 and 131 to 133 (GTR).

The protein belongs to the RNase PH family. As to quaternary structure, homohexameric ring arranged as a trimer of dimers.

The catalysed reaction is tRNA(n+1) + phosphate = tRNA(n) + a ribonucleoside 5'-diphosphate. Phosphorolytic 3'-5' exoribonuclease that plays an important role in tRNA 3'-end maturation. Removes nucleotide residues following the 3'-CCA terminus of tRNAs; can also add nucleotides to the ends of RNA molecules by using nucleoside diphosphates as substrates, but this may not be physiologically important. Probably plays a role in initiation of 16S rRNA degradation (leading to ribosome degradation) during starvation. The chain is Ribonuclease PH from Corynebacterium glutamicum (strain ATCC 13032 / DSM 20300 / JCM 1318 / BCRC 11384 / CCUG 27702 / LMG 3730 / NBRC 12168 / NCIMB 10025 / NRRL B-2784 / 534).